We begin with the raw amino-acid sequence, 138 residues long: MRTLWIVAVLLLGVEGNLWQFREMIKEATGKEPLTTYLFYACYCGWGGRGEPKDATDRCCFVHDCCYGKLTACSPKLDMYTYSQKNEDIVCGGDDPCKKEICECDKAAAICFLNNLGTYNEEYNNYRKSRCIEESPKC.

The signal sequence occupies residues 1 to 16; the sequence is MRTLWIVAVLLLGVEG. Intrachain disulfides connect Cys-42–Cys-131, Cys-44–Cys-60, Cys-59–Cys-111, Cys-65–Cys-138, Cys-66–Cys-104, Cys-73–Cys-97, and Cys-91–Cys-102. The Ca(2+) site is built by Tyr-43, Gly-45, and Gly-47. His-63 is an active-site residue. Asp-64 contributes to the Ca(2+) binding site. Asp-105 is a catalytic residue.

The protein belongs to the phospholipase A2 family. Group II subfamily. D49 sub-subfamily. The cofactor is Ca(2+). In terms of tissue distribution, expressed by the venom gland.

The protein localises to the secreted. It catalyses the reaction a 1,2-diacyl-sn-glycero-3-phosphocholine + H2O = a 1-acyl-sn-glycero-3-phosphocholine + a fatty acid + H(+). Snake venom phospholipase A2 (PLA2) that displays edema-inducing activities, exhibits indirect hemolytic activity, and inhibits ADP-induced platelet aggregation. PLA2 catalyzes the calcium-dependent hydrolysis of the 2-acyl groups in 3-sn-phosphoglycerides. In Protobothrops mucrosquamatus (Taiwan habu), this protein is Acidic phospholipase A2 2.